A 502-amino-acid chain; its full sequence is Glycerol kinase (502 aa).

Threonine 14 serves as a coordination point for ADP. Residues threonine 14, threonine 15, and serine 16 each coordinate ATP. Threonine 14 contacts sn-glycerol 3-phosphate. Arginine 18 is an ADP binding site. 4 residues coordinate sn-glycerol 3-phosphate: arginine 84, glutamate 85, tyrosine 136, and aspartate 246. Residues arginine 84, glutamate 85, tyrosine 136, aspartate 246, and glutamine 247 each contribute to the glycerol site. ADP is bound by residues threonine 268 and glycine 311. ATP is bound by residues threonine 268, glycine 311, glutamine 315, and glycine 412. ADP is bound by residues glycine 412 and asparagine 416.

The protein belongs to the FGGY kinase family. As to quaternary structure, homotetramer and homodimer (in equilibrium). Heterodimer with EIIA-Glc. Binds 1 zinc ion per glycerol kinase EIIA-Glc dimer. The zinc ion is important for dimerization.

The enzyme catalyses glycerol + ATP = sn-glycerol 3-phosphate + ADP + H(+). It participates in polyol metabolism; glycerol degradation via glycerol kinase pathway; sn-glycerol 3-phosphate from glycerol: step 1/1. With respect to regulation, activity of this regulatory enzyme is affected by several metabolites. Allosterically and non-competitively inhibited by fructose 1,6-bisphosphate (FBP) and unphosphorylated phosphocarrier protein EIIA-Glc (III-Glc), an integral component of the bacterial phosphotransferase (PTS) system. Key enzyme in the regulation of glycerol uptake and metabolism. Catalyzes the phosphorylation of glycerol to yield sn-glycerol 3-phosphate. This Salmonella arizonae (strain ATCC BAA-731 / CDC346-86 / RSK2980) protein is Glycerol kinase.